A 63-amino-acid chain; its full sequence is Cecropin-B (63 aa).

The signal sequence occupies residues 1–22 (MNFAKILSFVFALVLALSMTSA). The propeptide at 23–26 (APEP) is removed by a dipeptidylpeptidase. Lysine 47 is subject to 5-hydroxylysine; partial. At isoleucine 61 the chain carries Isoleucine amide.

Belongs to the cecropin family. In terms of processing, lepidopteran-B differs from lepidopteran-A by its hydroxylated residue. In terms of tissue distribution, highest expression in fat body and hemocytes. Is also expressed in Malpighian tubules and to a much lesser extent in midgut. Not present in silk gland.

The protein resides in the secreted. Cecropins have lytic and antibacterial activity against several Gram-positive and Gram-negative bacteria. The protein is Cecropin-B (CECB1) of Bombyx mori (Silk moth).